Here is a 128-residue protein sequence, read N- to C-terminus: Large ribosomal subunit protein bL17 (128 aa).

It belongs to the bacterial ribosomal protein bL17 family. As to quaternary structure, part of the 50S ribosomal subunit. Contacts protein L32.

The sequence is that of Large ribosomal subunit protein bL17 from Glaesserella parasuis serovar 5 (strain SH0165) (Haemophilus parasuis).